Here is a 726-residue protein sequence, read N- to C-terminus: WD repeat and coiled-coil-containing protein (726 aa).

WD repeat units follow at residues G55–N98 and K154–C194. The disordered stretch occupies residues R502 to S574. Positions G506–N515 are enriched in polar residues. The segment covering F517–P533 has biased composition (basic and acidic residues). The segment covering S550–S574 has biased composition (polar residues). A coiled-coil region spans residues S581–N609.

This chain is WD repeat and coiled-coil-containing protein (wdcp), found in Xenopus laevis (African clawed frog).